The following is a 388-amino-acid chain: Succinate--CoA ligase [ADP-forming] subunit beta (388 aa).

The ATP-grasp domain maps to 9–244 (KQLFKEYGLP…PSQEDAREAH (236 aa)). Residues K46, 53–55 (GRG), E99, T102, and E107 each bind ATP. The Mg(2+) site is built by N199 and D213. Residues N264 and 321–323 (GIV) contribute to the substrate site.

It belongs to the succinate/malate CoA ligase beta subunit family. Heterotetramer of two alpha and two beta subunits. Mg(2+) is required as a cofactor.

The enzyme catalyses succinate + ATP + CoA = succinyl-CoA + ADP + phosphate. It carries out the reaction GTP + succinate + CoA = succinyl-CoA + GDP + phosphate. Its pathway is carbohydrate metabolism; tricarboxylic acid cycle; succinate from succinyl-CoA (ligase route): step 1/1. Functionally, succinyl-CoA synthetase functions in the citric acid cycle (TCA), coupling the hydrolysis of succinyl-CoA to the synthesis of either ATP or GTP and thus represents the only step of substrate-level phosphorylation in the TCA. The beta subunit provides nucleotide specificity of the enzyme and binds the substrate succinate, while the binding sites for coenzyme A and phosphate are found in the alpha subunit. This is Succinate--CoA ligase [ADP-forming] subunit beta from Alteromonas mediterranea (strain DSM 17117 / CIP 110805 / LMG 28347 / Deep ecotype).